A 476-amino-acid chain; its full sequence is Argininosuccinate lyase (476 aa).

It belongs to the lyase 1 family. Argininosuccinate lyase subfamily.

It is found in the cytoplasm. It carries out the reaction 2-(N(omega)-L-arginino)succinate = fumarate + L-arginine. Its pathway is amino-acid biosynthesis; L-arginine biosynthesis; L-arginine from L-ornithine and carbamoyl phosphate: step 3/3. In Leptothrix cholodnii (strain ATCC 51168 / LMG 8142 / SP-6) (Leptothrix discophora (strain SP-6)), this protein is Argininosuccinate lyase.